A 385-amino-acid polypeptide reads, in one-letter code: Glucans biosynthesis protein C (385 aa).

10 consecutive transmembrane segments (helical) span residues 17–37 (AWLM…SHTW), 60–80 (MQVF…RYPL), 91–111 (VGIP…IMLQ), 137–157 (ISHL…VWIF), 173–193 (KFSM…YAVI), 212–232 (FIVM…LAFI), 239–259 (LFTT…VAYL), 274–294 (TESV…FSFG), 311–331 (ASLF…AYIT), and 338–358 (WLGF…LYEI).

This sequence belongs to the acyltransferase 3 family. OpgC subfamily.

It localises to the cell membrane. It participates in glycan metabolism; osmoregulated periplasmic glucan (OPG) biosynthesis. Its function is as follows. Necessary for the succinyl substitution of periplasmic glucans. Could catalyze the transfer of succinyl residues from the cytoplasmic side of the membrane to the nascent glucan backbones on the periplasmic side of the membrane. This chain is Glucans biosynthesis protein C, found in Escherichia coli O17:K52:H18 (strain UMN026 / ExPEC).